The primary structure comprises 1007 residues: RNA-binding protein 26 (1007 aa).

Lys94 participates in a covalent cross-link: Glycyl lysine isopeptide (Lys-Gly) (interchain with G-Cter in SUMO2). Lys106 participates in a covalent cross-link: Glycyl lysine isopeptide (Lys-Gly) (interchain with G-Cter in SUMO1); alternate. Residue Lys106 forms a Glycyl lysine isopeptide (Lys-Gly) (interchain with G-Cter in SUMO2); alternate linkage. Residues 106–118 (KKEEITKEEEREK) are compositionally biased toward basic and acidic residues. The segment at 106–241 (KKEEITKEEE…YTPVSSVPSI (136 aa)) is disordered. Ser127 is subject to Phosphoserine. A compositionally biased stretch (basic and acidic residues) spans 134-168 (RYRENRSRDERKKDDRSRKRDYDRNPPRRDSYRDR). A compositionally biased stretch (basic residues) spans 169-186 (YNRRRGRSRSYSRSRSRS). 2 stretches are compositionally biased toward basic and acidic residues: residues 187 to 201 (WSKERLRERDRDRSR) and 209 to 227 (RSRERDLVKPKYDLDRTDP). A compositionally biased stretch (polar residues) spans 228-241 (LENNYTPVSSVPSI). The C3H1-type zinc-finger motif lies at 288 to 316 (PMPKKRCRDYDEKGFCMRGDMCPFDHGSD). The span at 334 to 388 (QPPVVEGPPPPGLPPPPPILTPPPVNLRPPVPPPGPLPPSLPPVTGPPPPLPPLQ) shows a compositional bias: pro residues. Disordered regions lie at residues 334 to 404 (QPPV…SSVP) and 460 to 519 (IGLT…TNSP). Positions 394–404 (APPNSATSSVP) are enriched in low complexity. Ser496 is subject to Phosphoserine. Lys510 is subject to N6-acetyllysine. Ser518 carries the post-translational modification Phosphoserine. One can recognise an RRM 1 domain in the interval 532–606 (TKLELRKVPP…RFIKVYWHRE (75 aa)). A Phosphoserine modification is found at Ser616. Coiled-coil stretches lie at residues 719 to 795 (DNNE…KAAS) and 823 to 847 (KKMQAGEEVTELRRKYTELQLEAAK). A disordered region spans residues 853-884 (SGRGRGIHSRGRGAVHGRGRGRGRGRGVPGHA). The segment covering 857–877 (RGIHSRGRGAVHGRGRGRGRG) has biased composition (basic residues). The RRM 2 domain maps to 891-960 (RALEISAFTE…QDLKLAWNKP (70 aa)). A disordered region spans residues 966-1007 (AVETEEVEPDEEEFQEESLVDDSLLQDDDEEEEDNESRSWRR). Over residues 968–1000 (ETEEVEPDEEEFQEESLVDDSLLQDDDEEEEDN) the composition is skewed to acidic residues.

Functionally, may be involved in the turnover of nuclear polyadenylated (pA+) RNA. The protein is RNA-binding protein 26 of Homo sapiens (Human).